Consider the following 713-residue polypeptide: Mitochondrial intermediate peptidase (713 aa).

The N-terminal 35 residues, 1–35 (MLCVGRLGGLGARAAALPPRRAGRGILEAGIRARR), are a transit peptide targeting the mitochondrion. K126 is subject to N6-acetyllysine. H495 is a binding site for Zn(2+). Residue E496 is part of the active site. Zn(2+) contacts are provided by H499 and H502.

Belongs to the peptidase M3 family. Monomer. Zn(2+) serves as cofactor.

The protein localises to the mitochondrion matrix. The enzyme catalyses Release of an N-terminal octapeptide as second stage of processing of some proteins imported into the mitochondrion.. Activity is divalent cation-dependent. It is stimulated by manganese, magnesium or calcium ions and reversibly inhibited by zinc, cobalt and iron. Functionally, cleaves proteins, imported into the mitochondrion, to their mature size. This Pongo abelii (Sumatran orangutan) protein is Mitochondrial intermediate peptidase (MIPEP).